Reading from the N-terminus, the 543-residue chain is DNA damage checkpoint protein 1 (543 aa).

Residues 512-543 (KVGELAHASQSPESQDYGLGPTQQYQPKGIFD) are disordered.

It belongs to the DDC1 family. In terms of assembly, component of the checkpoint clamp complex composed of DDC1, MEC3 and RAD17.

The protein resides in the cytoplasm. It localises to the nucleus. Component of the checkpoint clamp complex involved in the surveillance mechanism that allows the DNA repair pathways to act to restore the integrity of the DNA prior to DNA synthesis or separation of the replicated chromosomes. The protein is DNA damage checkpoint protein 1 (DDC1) of Eremothecium gossypii (strain ATCC 10895 / CBS 109.51 / FGSC 9923 / NRRL Y-1056) (Yeast).